The primary structure comprises 340 residues: Biotin synthase (340 aa).

Residues 1 to 21 are disordered; that stretch reads MDAASVSFGSGHDLSSQPRHD. The region spanning 53–272 is the Radical SAM core domain; the sequence is NHVETANLLS…IAVARIMMPR (220 aa). Cys68, Cys72, and Cys75 together coordinate [4Fe-4S] cluster. [2Fe-2S] cluster is bound by residues Cys112, Cys143, Cys203, and Arg276.

Belongs to the radical SAM superfamily. Biotin synthase family. In terms of assembly, homodimer. The cofactor is [4Fe-4S] cluster. [2Fe-2S] cluster serves as cofactor.

The enzyme catalyses (4R,5S)-dethiobiotin + (sulfur carrier)-SH + 2 reduced [2Fe-2S]-[ferredoxin] + 2 S-adenosyl-L-methionine = (sulfur carrier)-H + biotin + 2 5'-deoxyadenosine + 2 L-methionine + 2 oxidized [2Fe-2S]-[ferredoxin]. It functions in the pathway cofactor biosynthesis; biotin biosynthesis; biotin from 7,8-diaminononanoate: step 2/2. Its function is as follows. Catalyzes the conversion of dethiobiotin (DTB) to biotin by the insertion of a sulfur atom into dethiobiotin via a radical-based mechanism. The polypeptide is Biotin synthase (Nitrobacter hamburgensis (strain DSM 10229 / NCIMB 13809 / X14)).